The chain runs to 242 residues: Type III pantothenate kinase (242 aa).

7–14 (DNSNTRTK) is a binding site for ATP. Residues Tyr88 and 95–98 (GADR) contribute to the substrate site. Asp97 functions as the Proton acceptor in the catalytic mechanism. A K(+)-binding site is contributed by Asp117. Thr120 contacts ATP. Thr172 provides a ligand contact to substrate.

This sequence belongs to the type III pantothenate kinase family. In terms of assembly, homodimer. Requires NH4(+) as cofactor. K(+) serves as cofactor.

Its subcellular location is the cytoplasm. It carries out the reaction (R)-pantothenate + ATP = (R)-4'-phosphopantothenate + ADP + H(+). It participates in cofactor biosynthesis; coenzyme A biosynthesis; CoA from (R)-pantothenate: step 1/5. In terms of biological role, catalyzes the phosphorylation of pantothenate (Pan), the first step in CoA biosynthesis. The sequence is that of Type III pantothenate kinase from Akkermansia muciniphila (strain ATCC BAA-835 / DSM 22959 / JCM 33894 / BCRC 81048 / CCUG 64013 / CIP 107961 / Muc).